Consider the following 473-residue polypeptide: Photosystem II CP43 reaction center protein (473 aa).

A propeptide spanning residues 1–14 is cleaved from the precursor; sequence MKILYSLRRFYHVE. N-acetylthreonine is present on Thr15. At Thr15 the chain carries Phosphothreonine. The next 5 membrane-spanning stretches (helical) occupy residues 69–93, 134–155, 178–200, 255–275, and 291–312; these read LFEV…PHLA, LLGP…KDRN, KALY…RKIT, KPFA…LSYS, and WFNN…ASQA. Position 367 (Glu367) interacts with [CaMn4O5] cluster. The helical transmembrane segment at 447–471 threads the bilayer; it reads RARAAAAGFEKGIDRDLEPVLYMTP.

Belongs to the PsbB/PsbC family. PsbC subfamily. In terms of assembly, PSII is composed of 1 copy each of membrane proteins PsbA, PsbB, PsbC, PsbD, PsbE, PsbF, PsbH, PsbI, PsbJ, PsbK, PsbL, PsbM, PsbT, PsbX, PsbY, PsbZ, Psb30/Ycf12, at least 3 peripheral proteins of the oxygen-evolving complex and a large number of cofactors. It forms dimeric complexes. The cofactor is Binds multiple chlorophylls and provides some of the ligands for the Ca-4Mn-5O cluster of the oxygen-evolving complex. It may also provide a ligand for a Cl- that is required for oxygen evolution. PSII binds additional chlorophylls, carotenoids and specific lipids..

The protein localises to the plastid. It localises to the chloroplast thylakoid membrane. One of the components of the core complex of photosystem II (PSII). It binds chlorophyll and helps catalyze the primary light-induced photochemical processes of PSII. PSII is a light-driven water:plastoquinone oxidoreductase, using light energy to abstract electrons from H(2)O, generating O(2) and a proton gradient subsequently used for ATP formation. The polypeptide is Photosystem II CP43 reaction center protein (Sorghum bicolor (Sorghum)).